We begin with the raw amino-acid sequence, 89 residues long: MAISKEKKDELIKEYARHDGDTGSPEVQIALLTSDINNLNAHLKANKQDHHSYVGLLKKIGHRRNLLRYLKNKDIQRYRDLINKLGLRR.

It belongs to the universal ribosomal protein uS15 family. Part of the 30S ribosomal subunit. Forms a bridge to the 50S subunit in the 70S ribosome, contacting the 23S rRNA.

Its function is as follows. One of the primary rRNA binding proteins, it binds directly to 16S rRNA where it helps nucleate assembly of the platform of the 30S subunit by binding and bridging several RNA helices of the 16S rRNA. In terms of biological role, forms an intersubunit bridge (bridge B4) with the 23S rRNA of the 50S subunit in the ribosome. This Lactobacillus gasseri (strain ATCC 33323 / DSM 20243 / BCRC 14619 / CIP 102991 / JCM 1131 / KCTC 3163 / NCIMB 11718 / NCTC 13722 / AM63) protein is Small ribosomal subunit protein uS15.